Reading from the N-terminus, the 137-residue chain is Ig heavy chain V region MOPC 315 (137 aa).

The signal sequence occupies residues 1-18; the sequence is MKVLSLLYLLTAIPGIMS. A framework-1 region spans residues 19–48; sequence DVQLQESGPGLVKPSQSLSLTCSVTGYSIT. Cysteine 40 and cysteine 114 are oxidised to a cystine. Residues 49-54 are complementarity-determining-1; sequence SGYFWN. The framework-2 stretch occupies residues 55 to 68; sequence WIRQFPGNKLEWLG. Residues 69–84 form a complementarity-determining-2 region; it reads FIKYDGSNGYNPSLKN. Residues 85–116 form a framework-3 region; the sequence is RVSITRDTSENQFFLKLNSVTTEDTATYYCAG. A complementarity-determining-3 region spans residues 117–126; that stretch reads DNDHLYYFDY. The framework-4 stretch occupies residues 127 to 137; the sequence is WGQGTTLTVSS.

The sequence is that of Ig heavy chain V region MOPC 315 from Mus musculus (Mouse).